A 152-amino-acid chain; its full sequence is Nucleoside diphosphate kinase (152 aa).

The ATP site is built by Lys-12, Phe-60, Arg-88, Thr-94, Arg-105, and Asn-115. His-118 acts as the Pros-phosphohistidine intermediate in catalysis.

The protein belongs to the NDK family. Homotrimer. Mg(2+) serves as cofactor.

It carries out the reaction a 2'-deoxyribonucleoside 5'-diphosphate + ATP = a 2'-deoxyribonucleoside 5'-triphosphate + ADP. The catalysed reaction is a ribonucleoside 5'-diphosphate + ATP = a ribonucleoside 5'-triphosphate + ADP. Its function is as follows. Major role in the synthesis of nucleoside triphosphates other than ATP. The ATP gamma phosphate is transferred to the NDP beta phosphate via a ping-pong mechanism, using a phosphorylated active-site intermediate. The protein is Nucleoside diphosphate kinase (ndk-1) of Neurospora crassa (strain ATCC 24698 / 74-OR23-1A / CBS 708.71 / DSM 1257 / FGSC 987).